Consider the following 65-residue polypeptide: Large ribosomal subunit protein uL29 (65 aa).

This sequence belongs to the universal ribosomal protein uL29 family.

This chain is Large ribosomal subunit protein uL29, found in Thioalkalivibrio sulfidiphilus (strain HL-EbGR7).